A 618-amino-acid chain; its full sequence is uncharacterized protein (618 aa).

The segment at 1-45 (MSSKSASKLKREAKKAERLAAKGESVKPSKKNGTKNGKDKEVDGV) is disordered. Basic and acidic residues-rich tracts occupy residues 14–27 (KKAE…ESVK) and 36–45 (NGKDKEVDGV). A phosphoserine mark is found at Ser50 and Ser53. Thr54 carries the phosphothreonine modification. Residues Ser55 and Ser64 each carry the phosphoserine modification. ABC transporter domains lie at 76 to 325 (IKID…LKQQ) and 388 to 609 (IAFN…QSRD). Residues 108–115 (GDNGSGKS) and 423–430 (GKNGTGKS) contribute to the ATP site.

Belongs to the ABC transporter superfamily.

It localises to the cytoplasm. This is an uncharacterized protein from Schizosaccharomyces pombe (strain 972 / ATCC 24843) (Fission yeast).